A 115-amino-acid chain; its full sequence is NADH-ubiquinone oxidoreductase chain 3 (115 aa).

The next 3 membrane-spanning stretches (helical) occupy residues 3 to 23 (FVLI…ITFW), 55 to 75 (FFLV…LLPL), and 84 to 104 (LPLM…SLAY).

The protein belongs to the complex I subunit 3 family. As to quaternary structure, core subunit of respiratory chain NADH dehydrogenase (Complex I) which is composed of 45 different subunits. Interacts with TMEM186. Interacts with TMEM242.

It localises to the mitochondrion inner membrane. It catalyses the reaction a ubiquinone + NADH + 5 H(+)(in) = a ubiquinol + NAD(+) + 4 H(+)(out). Its function is as follows. Core subunit of the mitochondrial membrane respiratory chain NADH dehydrogenase (Complex I) which catalyzes electron transfer from NADH through the respiratory chain, using ubiquinone as an electron acceptor. Essential for the catalytic activity of complex I. The polypeptide is NADH-ubiquinone oxidoreductase chain 3 (Pan paniscus (Pygmy chimpanzee)).